Reading from the N-terminus, the 319-residue chain is Acetyl esterase (319 aa).

The short motif at 91–93 (HGG) is the Involved in the stabilization of the negatively charged intermediate by the formation of the oxyanion hole element. Active-site residues include Ser-165, Asp-262, and His-292.

This sequence belongs to the 'GDXG' lipolytic enzyme family. Homodimer. Interacts with MalT and MelA.

It localises to the cytoplasm. In terms of biological role, displays esterase activity towards short chain fatty esters (acyl chain length of up to 8 carbons). Able to hydrolyze triacetylglycerol (triacetin) and tributyrylglycerol (tributyrin), but not trioleylglycerol (triolein) or cholesterol oleate. Negatively regulates MalT activity by antagonizing maltotriose binding. Inhibits MelA galactosidase activity. The protein is Acetyl esterase of Escherichia coli O81 (strain ED1a).